The primary structure comprises 164 residues: Putative 4-hydroxy-4-methyl-2-oxoglutarate aldolase (164 aa).

Substrate is bound by residues 74–77 (GGNL) and R96. D97 serves as a coordination point for a divalent metal cation.

This sequence belongs to the class II aldolase/RraA-like family. In terms of assembly, homotrimer. The cofactor is a divalent metal cation.

The catalysed reaction is 4-hydroxy-4-methyl-2-oxoglutarate = 2 pyruvate. It catalyses the reaction oxaloacetate + H(+) = pyruvate + CO2. Catalyzes the aldol cleavage of 4-hydroxy-4-methyl-2-oxoglutarate (HMG) into 2 molecules of pyruvate. Also contains a secondary oxaloacetate (OAA) decarboxylase activity due to the common pyruvate enolate transition state formed following C-C bond cleavage in the retro-aldol and decarboxylation reactions. This Thermus thermophilus (strain ATCC BAA-163 / DSM 7039 / HB27) protein is Putative 4-hydroxy-4-methyl-2-oxoglutarate aldolase.